Here is a 102-residue protein sequence, read N- to C-terminus: Small ribosomal subunit protein uS10 (102 aa).

It belongs to the universal ribosomal protein uS10 family. In terms of assembly, part of the 30S ribosomal subunit.

Functionally, involved in the binding of tRNA to the ribosomes. The chain is Small ribosomal subunit protein uS10 from Nitrosomonas eutropha (strain DSM 101675 / C91 / Nm57).